We begin with the raw amino-acid sequence, 110 residues long: Small ubiquitin-related modifier 3 (110 aa).

Residues K5 and K7 each participate in a glycyl lysine isopeptide (Lys-Gly) (interchain with G-Cter in SUMO2) cross-link. K11 participates in a covalent cross-link: Glycyl lysine isopeptide (Lys-Gly) (interchain with G-Cter in SUMO); alternate. Residue K11 forms a Glycyl lysine isopeptide (Lys-Gly) (interchain with G-Cter in SUMO2); alternate linkage. The region spanning 15 to 92 (DHINLKVAGQ…IDVFQQQTGG (78 aa)) is the Ubiquitin-like domain. Positions 88–101 (QQTGGSASRGSVPT) are enriched in polar residues. The interval 88 to 110 (QQTGGSASRGSVPTPNRCPDLCY) is disordered. A Glycyl lysine isopeptide (Gly-Lys) (interchain with K-? in acceptor proteins) cross-link involves residue G92. A propeptide spanning residues 93–110 (SASRGSVPTPNRCPDLCY) is cleaved from the precursor.

The protein belongs to the ubiquitin family. SUMO subfamily. As to quaternary structure, interacts with SAE2 and UBE2I. Covalently attached to a number of proteins. Interacts with USP25 (via ts SIM domain); the interaction sumoylates USP25 and inhibits its ubiquitin hydrolyzing activity. Interacts with BMAL1. Polymeric chains can be formed through Lys-11 cross-linking. In terms of processing, cleavage of precursor form by SENP1, SENP2 or SENP5 is necessary for function.

Its subcellular location is the cytoplasm. The protein localises to the nucleus. The protein resides in the PML body. Functionally, ubiquitin-like protein which can be covalently attached to target lysines either as a monomer or as a lysine-linked polymer. Does not seem to be involved in protein degradation and may function as an antagonist of ubiquitin in the degradation process. Plays a role in a number of cellular processes such as nuclear transport, DNA replication and repair, mitosis and signal transduction. Covalent attachment to its substrates requires prior activation by the E1 complex SAE1-SAE2 and linkage to the E2 enzyme UBE2I, and can be promoted by an E3 ligase such as PIAS1-4, RANBP2 or CBX4. Plays a role in the regulation of sumoylation status of SETX. In Mus musculus (Mouse), this protein is Small ubiquitin-related modifier 3.